We begin with the raw amino-acid sequence, 118 residues long: Non-specific lipid-transfer protein 1 (118 aa).

The N-terminal stretch at 1–20 (MARLAVAIAVVAAVVVVLAA) is a signal peptide. 4 cysteine pairs are disulfide-bonded: Cys-29-Cys-77, Cys-39-Cys-54, Cys-55-Cys-100, and Cys-75-Cys-114.

The protein belongs to the plant LTP family.

Plant non-specific lipid-transfer proteins transfer phospholipids as well as galactolipids across membranes. May play a role in wax or cutin deposition in the cell walls of expanding epidermal cells and certain secretory tissues. This chain is Non-specific lipid-transfer protein 1 (LTP1), found in Sorghum bicolor (Sorghum).